We begin with the raw amino-acid sequence, 240 residues long: Orotidine 5'-phosphate decarboxylase (240 aa).

Substrate is bound by residues Asp15, Lys37, Asp64–Thr73, Thr127, Arg188, Gln197, Gly217, and Arg218. Lys66 (proton donor) is an active-site residue.

The protein belongs to the OMP decarboxylase family. Type 1 subfamily. Homodimer.

The catalysed reaction is orotidine 5'-phosphate + H(+) = UMP + CO2. Its pathway is pyrimidine metabolism; UMP biosynthesis via de novo pathway; UMP from orotate: step 2/2. Catalyzes the decarboxylation of orotidine 5'-monophosphate (OMP) to uridine 5'-monophosphate (UMP). The sequence is that of Orotidine 5'-phosphate decarboxylase from Citrifermentans bemidjiense (strain ATCC BAA-1014 / DSM 16622 / JCM 12645 / Bem) (Geobacter bemidjiensis).